Here is a 447-residue protein sequence, read N- to C-terminus: Trigger factor (447 aa).

The PPIase FKBP-type domain occupies 159–244 (GDMLLMQVES…VREIKEEKLP (86 aa)).

The protein belongs to the FKBP-type PPIase family. Tig subfamily.

The protein localises to the cytoplasm. The enzyme catalyses [protein]-peptidylproline (omega=180) = [protein]-peptidylproline (omega=0). Functionally, involved in protein export. Acts as a chaperone by maintaining the newly synthesized protein in an open conformation. Functions as a peptidyl-prolyl cis-trans isomerase. In Dehalococcoides mccartyi (strain CBDB1), this protein is Trigger factor.